The following is a 162-amino-acid chain: Ribosome maturation factor RimP (162 aa).

It belongs to the RimP family.

Its subcellular location is the cytoplasm. In terms of biological role, required for maturation of 30S ribosomal subunits. The chain is Ribosome maturation factor RimP from Cupriavidus pinatubonensis (strain JMP 134 / LMG 1197) (Cupriavidus necator (strain JMP 134)).